The chain runs to 107 residues: Replication restart protein PriB (107 aa).

The region spanning 1–97 (MNTLELSARV…LHLQQARRIA (97 aa)) is the SSB domain.

It belongs to the PriB family. Homodimer. Interacts with PriA and DnaT. Component of the replication restart primosome. Primosome assembly occurs via a 'hand-off' mechanism. PriA binds to replication forks, subsequently PriB then DnaT bind; DnaT then displaces ssDNA to generate the helicase loading substrate.

In terms of biological role, involved in the restart of stalled replication forks, which reloads the replicative helicase on sites other than the origin of replication; the PriA-PriB pathway is the major replication restart pathway. During primosome assembly it facilitates complex formation between PriA and DnaT on DNA; stabilizes PriA on DNA. Stimulates the DNA unwinding activity of PriA helicase. This Bordetella parapertussis (strain 12822 / ATCC BAA-587 / NCTC 13253) protein is Replication restart protein PriB.